Consider the following 568-residue polypeptide: 2-succinyl-5-enolpyruvyl-6-hydroxy-3-cyclohexene-1-carboxylate synthase (568 aa).

The protein belongs to the TPP enzyme family. MenD subfamily. Homodimer. Mg(2+) serves as cofactor. Mn(2+) is required as a cofactor. Requires thiamine diphosphate as cofactor.

The catalysed reaction is isochorismate + 2-oxoglutarate + H(+) = 5-enolpyruvoyl-6-hydroxy-2-succinyl-cyclohex-3-ene-1-carboxylate + CO2. It participates in quinol/quinone metabolism; 1,4-dihydroxy-2-naphthoate biosynthesis; 1,4-dihydroxy-2-naphthoate from chorismate: step 2/7. The protein operates within quinol/quinone metabolism; menaquinone biosynthesis. Functionally, catalyzes the thiamine diphosphate-dependent decarboxylation of 2-oxoglutarate and the subsequent addition of the resulting succinic semialdehyde-thiamine pyrophosphate anion to isochorismate to yield 2-succinyl-5-enolpyruvyl-6-hydroxy-3-cyclohexene-1-carboxylate (SEPHCHC). This Haemophilus influenzae (strain PittGG) protein is 2-succinyl-5-enolpyruvyl-6-hydroxy-3-cyclohexene-1-carboxylate synthase.